Here is a 527-residue protein sequence, read N- to C-terminus: Peptide chain release factor 3 (527 aa).

The tr-type G domain maps to 10–278 (DRRRTFAIIS…TFVENAPAPL (269 aa)). GTP contacts are provided by residues 19-26 (SHPDAGKT), 87-91 (DTPGH), and 141-144 (NKLD).

It belongs to the TRAFAC class translation factor GTPase superfamily. Classic translation factor GTPase family. PrfC subfamily.

The protein resides in the cytoplasm. Increases the formation of ribosomal termination complexes and stimulates activities of RF-1 and RF-2. It binds guanine nucleotides and has strong preference for UGA stop codons. It may interact directly with the ribosome. The stimulation of RF-1 and RF-2 is significantly reduced by GTP and GDP, but not by GMP. The sequence is that of Peptide chain release factor 3 from Geobacter metallireducens (strain ATCC 53774 / DSM 7210 / GS-15).